Reading from the N-terminus, the 548-residue chain is Membrane protein insertase YidC (548 aa).

The helical transmembrane segment at 6 to 26 threads the bilayer; that stretch reads NLLVIALLFVSFMIWQAWEQD. Positions 28–55 are disordered; it reads NPQPQAQQTTQTTTTAAGSAADQGVPAS. A compositionally biased stretch (low complexity) spans 30-50; that stretch reads QPQAQQTTQTTTTAAGSAADQ. The next 4 helical transmembrane spans lie at 350-370, 420-440, 458-478, and 499-519; these read FVGNWGFSIIIITFIVRGIMY, LGGCFPLLIQMPIFLALYYML, LSAQDPYYILPILMGVTMFFI, and PVIFTVFFLWFPSGLVLYYIV.

The protein belongs to the OXA1/ALB3/YidC family. Type 1 subfamily. In terms of assembly, interacts with the Sec translocase complex via SecD. Specifically interacts with transmembrane segments of nascent integral membrane proteins during membrane integration.

It localises to the cell inner membrane. Its function is as follows. Required for the insertion and/or proper folding and/or complex formation of integral membrane proteins into the membrane. Involved in integration of membrane proteins that insert both dependently and independently of the Sec translocase complex, as well as at least some lipoproteins. Aids folding of multispanning membrane proteins. The sequence is that of Membrane protein insertase YidC from Shigella boydii serotype 18 (strain CDC 3083-94 / BS512).